The following is a 244-amino-acid chain: Nuclear protein UL4 homolog (244 aa).

Positions 193 to 227 (RPDDQTTPTPTPHQYTSQRRQPETNCPSSPQPAFF) are disordered. Polar residues predominate over residues 205–220 (HQYTSQRRQPETNCPS).

It belongs to the alphaherpesvirinae HHV-1 UL4 family.

It is found in the host nucleus. This Varicella-zoster virus (strain Dumas) (HHV-3) protein is Nuclear protein UL4 homolog.